A 630-amino-acid polypeptide reads, in one-letter code: Transcription factor MYC1 (630 aa).

2 disordered regions span residues 356–398 (FGDS…NNEE) and 430–463 (VKEA…EAER). Basic residues predominate over residues 440-449 (KPRKRGRKPA). Positions 450–463 (NGREEPLNHVEAER) are enriched in basic and acidic residues. Positions 453–466 (EEPLNHVEAERQRR) are basic motif; degenerate. A bHLH domain is found at 453–502 (EEPLNHVEAERQRREKLNQRFYALRAVVPNVSKMDKASLLGDAIAYINEL). Positions 467 to 502 (EKLNQRFYALRAVVPNVSKMDKASLLGDAIAYINEL) are helix-loop-helix motif.

In terms of tissue distribution, highly expressed in trichomes and at lower levels in leaves and flowers. Expressed at low levels in roots, stems, leaves, flowers and fruits.

It localises to the nucleus. In terms of biological role, transcriptional activator that binds to the G-box motif (5'-AACGTG-3') found in a number of promoters of jasmonate-induced genes. Transcription activator involved in the transcriptional regulation of terpene biosynthesis in glandular trichomes. Binds to the promoter of the linalool synthase TPS5 and promotes TPS5 gene transactivation. Acts synergistically with EOT1 in the transactivation of TPS5. Involved in type VI glandular trichome development. Involved in the activation of terpene synthases required for volatile mono- and sesquiterpenes synthesis by the glandular cells of type VI trichomes. The protein is Transcription factor MYC1 of Solanum lycopersicum (Tomato).